Here is a 389-residue protein sequence, read N- to C-terminus: Putative sugar efflux transporter DR_1322 (389 aa).

Helical transmembrane passes span 10 to 30, 34 to 54, 69 to 89, 96 to 116, 135 to 155, 161 to 181, 211 to 231, 246 to 266, 281 to 301, 308 to 328, 341 to 361, and 363 to 383; these read AVLL…LFAV, GMTP…AVLV, KPLV…LSGV, MATG…VFAF, VLRA…AAVL, SGVF…LLFI, GWVV…MVMF, VGFL…LFVL, LLLF…PLLI, AAVL…LMPG, SVVG…VFGY, and PVFL…LWAT.

This sequence belongs to the major facilitator superfamily. Set transporter family.

The protein localises to the cell membrane. Involved in the efflux of sugars. The physiological role may be the detoxification of non-metabolizable sugar analogs. The sequence is that of Putative sugar efflux transporter DR_1322 from Deinococcus radiodurans (strain ATCC 13939 / DSM 20539 / JCM 16871 / CCUG 27074 / LMG 4051 / NBRC 15346 / NCIMB 9279 / VKM B-1422 / R1).